A 157-amino-acid polypeptide reads, in one-letter code: MVSKELSKEQRQKRIQDIIARESISTQGELVQRLRADNIQVTQATISRDINELRLVRLPIGKGRHRYALAQMTGHTDVEEELGRLFQNFVHDVDRGENMLVIRTADGHATGVALLLDRLRRDDIVGTLAGEDTIFVVARTTLEAESLMEEFHALMLG.

It belongs to the ArgR family.

The protein localises to the cytoplasm. The protein operates within amino-acid biosynthesis; L-arginine biosynthesis [regulation]. Functionally, regulates arginine biosynthesis genes. This chain is Arginine repressor, found in Deinococcus deserti (strain DSM 17065 / CIP 109153 / LMG 22923 / VCD115).